The sequence spans 186 residues: Ribosome-recycling factor (186 aa).

Belongs to the RRF family.

The protein resides in the cytoplasm. In terms of biological role, responsible for the release of ribosomes from messenger RNA at the termination of protein biosynthesis. May increase the efficiency of translation by recycling ribosomes from one round of translation to another. In Phocaeicola vulgatus (strain ATCC 8482 / DSM 1447 / JCM 5826 / CCUG 4940 / NBRC 14291 / NCTC 11154) (Bacteroides vulgatus), this protein is Ribosome-recycling factor.